The sequence spans 363 residues: Heat-inducible transcription repressor HrcA (363 aa).

Belongs to the HrcA family.

Its function is as follows. Negative regulator of class I heat shock genes (grpE-dnaK-dnaJ and groELS operons). Prevents heat-shock induction of these operons. The sequence is that of Heat-inducible transcription repressor HrcA from Rhizobium radiobacter (Agrobacterium tumefaciens).